The sequence spans 112 residues: DNA-binding protein TSIB_0525 (112 aa).

It belongs to the PDCD5 family.

The chain is DNA-binding protein TSIB_0525 from Thermococcus sibiricus (strain DSM 12597 / MM 739).